The chain runs to 57 residues: Large ribosomal subunit protein bL32 (57 aa).

Belongs to the bacterial ribosomal protein bL32 family.

The polypeptide is Large ribosomal subunit protein bL32 (Ureaplasma parvum serovar 3 (strain ATCC 27815 / 27 / NCTC 11736)).